The following is an 851-amino-acid chain: B-box type zinc finger protein ncl-1 (851 aa).

Residues 71–91 (GFGFGSPSSTTSSSPPLSNSP) form a disordered region. Positions 76-91 (SPSSTTSSSPPLSNSP) are enriched in low complexity. The segment at 127–174 (VPAVHCSGCKSNETATSFCQDCNANLCDNCTMAHKFMHCFADHRVVSL) adopts a B box-type 1; atypical zinc-finger fold. The Zn(2+) site is built by cysteine 132, cysteine 135, cysteine 156, and histidine 160. Over residues 176–197 (TPGTGSSSSSTSSSSSASSTSS) the composition is skewed to low complexity. Positions 176–211 (TPGTGSSSSSTSSSSSASSTSSHQVPSLGGKQSPDS) are disordered. The B box-type 2 zinc-finger motif lies at 218-261 (KRSVLCLQHRASELVFFCVSCNLAICRDCTVSDHPSGTHQYELI). Zn(2+) is bound by residues cysteine 223, histidine 226, cysteine 246, and histidine 251. Residues 303 to 331 (SLHNAHAQLEETVSNLINVIQDQKKTLAK) adopt a coiled-coil conformation. NHL repeat units lie at residues 573–616 (HCKF…FDKE), 620–665 (KFQF…YNQY), 666–707 (GQFL…FDMF), 708–750 (GNIL…FSYE), and 751–794 (GQYL…FSQD).

As to expression, present in cells in which nucleoli are absent, and absent from large cells in which nucleoli are prominent. Highly expressed in the gonads.

The protein resides in the cytoplasm. Functionally, translational repressor that inhibits protein synthesis. Represses the translation of mRNAs such as fib-1, probably by being recruited by RNA-binding protein nos-2 and the Pumilio proteins puf-5, puf-8 and puf-9 to the consensus core PUF binding motif in the 3'-UTR of fib-1 mRNA. Negatively regulates ribosomal RNA (rRNA) synthesis, ribosomal protein synthesis and nucleolus size. Its role in the negative regulation of nucleolus size is most likely through its negative regulation of the translation of proteins such as the rRNA 2'-O-methyltransferase fib-1, and dao-5. Might act directly as a transcription factor to inhibit RNA polymerase I (rRNA) and III (5S RNA) transcription. Plays a role in embryonic development, and in particular, is involved in regulating the localization of proteins, such as par-2, that are required for embryonic cell polarity. Plays a role in the regulation of lifespan, and the response to nutrient availability. The chain is B-box type zinc finger protein ncl-1 from Caenorhabditis elegans.